Reading from the N-terminus, the 146-residue chain is D-aminoacyl-tRNA deacylase (146 aa).

A Gly-cisPro motif, important for rejection of L-amino acids motif is present at residues 138 to 139 (GP).

Belongs to the DTD family. As to quaternary structure, homodimer.

Its subcellular location is the cytoplasm. It carries out the reaction glycyl-tRNA(Ala) + H2O = tRNA(Ala) + glycine + H(+). It catalyses the reaction a D-aminoacyl-tRNA + H2O = a tRNA + a D-alpha-amino acid + H(+). In terms of biological role, an aminoacyl-tRNA editing enzyme that deacylates mischarged D-aminoacyl-tRNAs. Also deacylates mischarged glycyl-tRNA(Ala), protecting cells against glycine mischarging by AlaRS. Acts via tRNA-based rather than protein-based catalysis; rejects L-amino acids rather than detecting D-amino acids in the active site. By recycling D-aminoacyl-tRNA to D-amino acids and free tRNA molecules, this enzyme counteracts the toxicity associated with the formation of D-aminoacyl-tRNA entities in vivo and helps enforce protein L-homochirality. The sequence is that of D-aminoacyl-tRNA deacylase from Xanthomonas oryzae pv. oryzae (strain MAFF 311018).